The sequence spans 123 residues: Large ribosomal subunit protein uL24 (123 aa).

Belongs to the universal ribosomal protein uL24 family. In terms of assembly, part of the 50S ribosomal subunit.

Its function is as follows. One of two assembly initiator proteins, it binds directly to the 5'-end of the 23S rRNA, where it nucleates assembly of the 50S subunit. Located at the polypeptide exit tunnel on the outside of the subunit. In Pyrobaculum aerophilum (strain ATCC 51768 / DSM 7523 / JCM 9630 / CIP 104966 / NBRC 100827 / IM2), this protein is Large ribosomal subunit protein uL24.